The primary structure comprises 306 residues: Methionyl-tRNA formyltransferase (306 aa).

109 to 112 (SILP) contributes to the (6S)-5,6,7,8-tetrahydrofolate binding site.

It belongs to the Fmt family.

The enzyme catalyses L-methionyl-tRNA(fMet) + (6R)-10-formyltetrahydrofolate = N-formyl-L-methionyl-tRNA(fMet) + (6S)-5,6,7,8-tetrahydrofolate + H(+). Functionally, attaches a formyl group to the free amino group of methionyl-tRNA(fMet). The formyl group appears to play a dual role in the initiator identity of N-formylmethionyl-tRNA by promoting its recognition by IF2 and preventing the misappropriation of this tRNA by the elongation apparatus. The protein is Methionyl-tRNA formyltransferase of Herpetosiphon aurantiacus (strain ATCC 23779 / DSM 785 / 114-95).